We begin with the raw amino-acid sequence, 552 residues long: uncharacterized protein (552 aa).

Transmembrane regions (helical) follow at residues 127–147 (AIML…ISLL), 160–180 (LIIV…YINI), 393–413 (LTKQ…LSAV), and 517–537 (VIDS…FICI).

The protein localises to the membrane. This is an uncharacterized protein from Saccharomyces cerevisiae (strain ATCC 204508 / S288c) (Baker's yeast).